A 158-amino-acid polypeptide reads, in one-letter code: NAD(P)H-quinone oxidoreductase subunit J, chloroplastic (158 aa).

Belongs to the complex I 30 kDa subunit family. In terms of assembly, NDH is composed of at least 16 different subunits, 5 of which are encoded in the nucleus.

It is found in the plastid. The protein localises to the chloroplast thylakoid membrane. It carries out the reaction a plastoquinone + NADH + (n+1) H(+)(in) = a plastoquinol + NAD(+) + n H(+)(out). The catalysed reaction is a plastoquinone + NADPH + (n+1) H(+)(in) = a plastoquinol + NADP(+) + n H(+)(out). In terms of biological role, NDH shuttles electrons from NAD(P)H:plastoquinone, via FMN and iron-sulfur (Fe-S) centers, to quinones in the photosynthetic chain and possibly in a chloroplast respiratory chain. The immediate electron acceptor for the enzyme in this species is believed to be plastoquinone. Couples the redox reaction to proton translocation, and thus conserves the redox energy in a proton gradient. This chain is NAD(P)H-quinone oxidoreductase subunit J, chloroplastic, found in Angiopteris evecta (Mule's foot fern).